Consider the following 404-residue polypeptide: Tryptophan synthase beta chain (404 aa).

At lysine 98 the chain carries N6-(pyridoxal phosphate)lysine.

Belongs to the TrpB family. Tetramer of two alpha and two beta chains. The cofactor is pyridoxal 5'-phosphate.

It catalyses the reaction (1S,2R)-1-C-(indol-3-yl)glycerol 3-phosphate + L-serine = D-glyceraldehyde 3-phosphate + L-tryptophan + H2O. It participates in amino-acid biosynthesis; L-tryptophan biosynthesis; L-tryptophan from chorismate: step 5/5. Its function is as follows. The beta subunit is responsible for the synthesis of L-tryptophan from indole and L-serine. The polypeptide is Tryptophan synthase beta chain (Rhodopseudomonas palustris (strain BisB18)).